A 363-amino-acid polypeptide reads, in one-letter code: Phosphoserine aminotransferase (363 aa).

Arg42 is an L-glutamate binding site. Residues Trp105, Thr155, Asp175, and Gln198 each coordinate pyridoxal 5'-phosphate. Lys199 carries the post-translational modification N6-(pyridoxal phosphate)lysine. 240 to 241 (NT) is a pyridoxal 5'-phosphate binding site.

It belongs to the class-V pyridoxal-phosphate-dependent aminotransferase family. SerC subfamily. Homodimer. Pyridoxal 5'-phosphate serves as cofactor.

It is found in the cytoplasm. The catalysed reaction is O-phospho-L-serine + 2-oxoglutarate = 3-phosphooxypyruvate + L-glutamate. It catalyses the reaction 4-(phosphooxy)-L-threonine + 2-oxoglutarate = (R)-3-hydroxy-2-oxo-4-phosphooxybutanoate + L-glutamate. It functions in the pathway amino-acid biosynthesis; L-serine biosynthesis; L-serine from 3-phospho-D-glycerate: step 2/3. It participates in cofactor biosynthesis; pyridoxine 5'-phosphate biosynthesis; pyridoxine 5'-phosphate from D-erythrose 4-phosphate: step 3/5. In terms of biological role, catalyzes the reversible conversion of 3-phosphohydroxypyruvate to phosphoserine and of 3-hydroxy-2-oxo-4-phosphonooxybutanoate to phosphohydroxythreonine. This is Phosphoserine aminotransferase from Janthinobacterium sp. (strain Marseille) (Minibacterium massiliensis).